We begin with the raw amino-acid sequence, 396 residues long: Putative pyridoxal phosphate-dependent acyltransferase (396 aa).

Position 111 to 112 (111 to 112 (GF)) interacts with pyridoxal 5'-phosphate. His136 lines the substrate pocket. Residues Ser186, 211–214 (DDAH), and 241–244 (TLSK) contribute to the pyridoxal 5'-phosphate site. An N6-(pyridoxal phosphate)lysine modification is found at Lys244. Thr358 serves as a coordination point for substrate.

It belongs to the class-II pyridoxal-phosphate-dependent aminotransferase family. In terms of assembly, homodimer. Requires pyridoxal 5'-phosphate as cofactor.

This Bacillus anthracis protein is Putative pyridoxal phosphate-dependent acyltransferase.